A 562-amino-acid polypeptide reads, in one-letter code: Glutamyl-tRNA(Gln) amidotransferase subunit B, chloroplastic/mitochondrial (562 aa).

The interval 48-76 is disordered; it reads SVASNSKREPRPVKTRVMTQERGSGETQT. Polar residues predominate over residues 64–76; that stretch reads VMTQERGSGETQT.

The protein belongs to the GatB/GatE family. GatB subfamily. Subunit of the heterotrimeric GatCAB amidotransferase (AdT) complex, composed of A, B and C subunits.

The protein resides in the mitochondrion. It localises to the plastid. The protein localises to the chloroplast. It catalyses the reaction L-glutamyl-tRNA(Gln) + L-glutamine + ATP + H2O = L-glutaminyl-tRNA(Gln) + L-glutamate + ADP + phosphate + H(+). Functionally, allows the formation of correctly charged Gln-tRNA(Gln) through the transamidation of misacylated Glu-tRNA(Gln) in chloroplasts and mitochondria. The reaction takes place in the presence of glutamine and ATP through an activated gamma-phospho-Glu-tRNA(Gln). This Physcomitrium patens (Spreading-leaved earth moss) protein is Glutamyl-tRNA(Gln) amidotransferase subunit B, chloroplastic/mitochondrial.